A 1491-amino-acid polypeptide reads, in one-letter code: Pleckstrin homology domain-containing family H member 2 (1491 aa).

A coiled-coil region spans residues 19–177 (ALEAQLMKFR…ELQEKKISCV (159 aa)). Disordered regions lie at residues 232 to 435 (AEKP…PFQP), 506 to 546 (DDGL…LHRF), and 612 to 668 (SSSP…SDYA). Residues 253-264 (TSCSSEQNQKTR) show a composition bias toward polar residues. The span at 374–385 (KEQDSSSDELNK) shows a compositional bias: basic and acidic residues. Polar residues predominate over residues 392–406 (LDYTSSSSEANTPSP). The span at 657 to 666 (SDSSAASESD) shows a compositional bias: low complexity. PH domains are found at residues 702–796 (PLEK…SVLR) and 810–918 (KPAV…VAAG). In terms of domain architecture, MyTH4 spans 954–1109 (HSKEGILSPL…PSRMEILSTL (156 aa)). The FERM domain maps to 1120 to 1449 (FSIPVHFMNG…SYINSFHQQK (330 aa)). Residues 1466–1491 (QAPQARVMGSQPPLSNSRPTKGPTLL) form a disordered region.

In terms of assembly, self-associates. Interacts with TGFB1I1. As to expression, expressed in the kidney and testis. Expressed in the kidney exclusively by glomerular podocytes.

The protein resides in the cytoplasm. Its subcellular location is the cytoskeleton. It is found in the cell membrane. It localises to the cell projection. The protein localises to the lamellipodium. In terms of biological role, in the kidney glomerulus may play a role in linking podocyte foot processes to the glomerular basement membrane. May be involved in stabilization of F-actin by attenuating its depolymerization. Can recruit TGFB1I1 from focal adhesions to podocyte lamellipodia. The polypeptide is Pleckstrin homology domain-containing family H member 2 (Plekhh2) (Mus musculus (Mouse)).